Consider the following 170-residue polypeptide: Calcineurin subunit B type 2 (170 aa).

EF-hand domains follow at residues 18–46 (DEIR…FMSL), 50–85 (QQNP…FSVK), 87–122 (DKLS…MVGN), and 128–163 (QLQQ…TDIH). 19 residues coordinate Ca(2+): D31, D33, S35, E42, D63, D65, N67, E69, E74, D100, D102, D104, Y106, E111, D141, D143, D145, K147, and E152. S35 is subject to Phosphoserine.

This sequence belongs to the calcineurin regulatory subunit family. In terms of assembly, composed of a catalytic subunit (A) and a regulatory subunit (B). Interacts with sra.

Functionally, calcineurin is a calcium-binding and calmodulin-binding protein found in all cells from yeast to mammals, and a calcium-dependent, calmodulin-stimulated protein phosphatase. This Drosophila melanogaster (Fruit fly) protein is Calcineurin subunit B type 2 (CanB2).